The chain runs to 350 residues: Arabinogalactan endo-beta-1,4-galactanase A (350 aa).

The N-terminal stretch at 1 to 17 (MILSSLLPLSLVTLTSA) is a signal peptide. N-linked (GlcNAc...) asparagine glycosylation is present at Asn-129. Glu-153 (proton donor) is an active-site residue. Glu-263 functions as the Nucleophile in the catalytic mechanism.

Belongs to the glycosyl hydrolase 53 family.

The protein localises to the secreted. The catalysed reaction is The enzyme specifically hydrolyzes (1-&gt;4)-beta-D-galactosidic linkages in type I arabinogalactans.. In terms of biological role, endogalactanase involved in the degradation of plant cell wall polysaccharides, and more particularly of hairy regions of pectin. This chain is Arabinogalactan endo-beta-1,4-galactanase A (galA), found in Emericella nidulans (strain FGSC A4 / ATCC 38163 / CBS 112.46 / NRRL 194 / M139) (Aspergillus nidulans).